A 177-amino-acid chain; its full sequence is MNGGHIQLIIGPMLSGKSTELIRRVRRYQIAQYKCVTIKYSNDNRYGTGLWTHDKNNFAALEVTKLCDVLEAITDFSVIGIDEGQFFPDIVEFCERMANEGKIVIVAALDGTFQRRPFNNILNLIPLSEMVVKLTAVCMKCFKEASFSKRLGAETEIEIIGGNDMYQSVCRKCYIDS.

11-18 is a binding site for ATP; sequence GPMLSGKS. The active-site Proton acceptor is Glu83. A substrate-binding site is contributed by Phe113. Cys138 and Cys141 together coordinate Zn(2+). 157-161 serves as a coordination point for substrate; it reads IEIIG. Zn(2+) contacts are provided by Cys170 and Cys173.

This sequence belongs to the thymidine kinase family. Homotetramer. Two molecules of substrate bind to each enzyme tetramer.

It catalyses the reaction thymidine + ATP = dTMP + ADP + H(+). Its function is as follows. Phosphorylates thymidine and thymidine analogs, such as azidothymidine (AZT). Part of the salvage pathway for pyrimidine deoxyribonucleotide synthesis. The polypeptide is Thymidine kinase (OPG101) (Monkeypox virus (strain Zaire-96-I-16) (MPX)).